Consider the following 60-residue polypeptide: UPF0434 protein YcaR (60 aa).

This sequence belongs to the UPF0434 family.

This Salmonella agona (strain SL483) protein is UPF0434 protein YcaR.